A 380-amino-acid polypeptide reads, in one-letter code: Cytochrome b (380 aa).

4 helical membrane-spanning segments follow: residues 33 to 53 (FGSLLGLCLASQILTGLFLAM), 77 to 98 (WLIRNMHANGASFFFICLYLHI), 113 to 133 (WNVGVVLLLLVMMTAFVGYVL), and 178 to 198 (FFAFHFLFPFVILAAAVLHLL). Residues His83 and His97 each contribute to the heme b site. Residues His182 and His196 each contribute to the heme b site. His201 is an a ubiquinone binding site. A run of 4 helical transmembrane segments spans residues 226–246 (YKDLLGFAVLLMGLTSLALFS), 288–308 (LGGVLALLASILILMVVPFLH), 320–340 (ASQFLFWTLVADVVVLTWIGG), and 347–367 (FIIIGQVASVLYFSLFLVLFP).

It belongs to the cytochrome b family. As to quaternary structure, the cytochrome bc1 complex contains 3 respiratory subunits (MT-CYB, CYC1 and UQCRFS1), 2 core proteins (UQCRC1 and UQCRC2) and probably 6 low-molecular weight proteins. It depends on heme b as a cofactor.

Its subcellular location is the mitochondrion inner membrane. In terms of biological role, component of the ubiquinol-cytochrome c reductase complex (complex III or cytochrome b-c1 complex) that is part of the mitochondrial respiratory chain. The b-c1 complex mediates electron transfer from ubiquinol to cytochrome c. Contributes to the generation of a proton gradient across the mitochondrial membrane that is then used for ATP synthesis. The protein is Cytochrome b (mt-cyb) of Scomber scombrus (Atlantic mackerel).